The sequence spans 36 residues: Toxin Bcg III 29.21 (36 aa).

A disulfide bridge connects residues Cys6 and Cys31.

It localises to the secreted. Its subcellular location is the nematocyst. The chain is Toxin Bcg III 29.21 from Bunodosoma cangicum (Sea anemone).